A 514-amino-acid chain; its full sequence is M-phase inducer phosphatase 1 (514 aa).

Positions 73–83 (MGSSESTDSGF) match the Phosphodegron motif. Ser75 carries the phosphoserine; by CHEK1 modification. Ser78, Ser81, and Ser87 each carry phosphoserine; by NEK11. The residue at position 106 (Ser106) is a Phosphoserine. Ser123 carries the post-translational modification Phosphoserine; by CHEK1 and CHEK2. A KEN box motif is present at residues 140-142 (KEN). At Ser172 the chain carries Phosphoserine; by CHEK1. The tract at residues 256-308 (PCGSSTRAVLKRADRSHEEPPRGTKRRKSVPSPVKAKADVPEPAQLPSQSLSL) is disordered. The span at 266-277 (KRADRSHEEPPR) shows a compositional bias: basic and acidic residues. 2 positions are modified to phosphoserine; by CHEK1 and CHEK2: Ser271 and Ser284. Ser311 bears the Phosphoserine mark. One can recognise a Rhodanese domain in the interval 366-472 (LIKEFVIIDC…FFLKCQSHCE (107 aa)). Cys421 is an active-site residue. Position 497 is a phosphothreonine; by CHEK1 (Thr497). Residues Ser503 and Ser509 each carry the phosphoserine; by PLK3 modification.

The protein belongs to the MPI phosphatase family. As to quaternary structure, interacts with CCNB1/cyclin B1. Interacts with YWHAE/14-3-3 epsilon when phosphorylated. Interacts with CUL1 specifically when CUL1 is neddylated and active. Interacts with BTRC/BTRCP1 and FBXW11/BTRCP2. Interactions with CUL1, BTRC and FBXW11 are enhanced upon DNA damage. Interacts with CHEK2; mediates CDC25A phosphorylation and degradation in response to infrared-induced DNA damages. Interacts with HSP90AB1; prevents heat shock-mediated CDC25A degradation and contributes to cell cycle progression. Phosphorylated by CHEK1 on Ser-75, Ser-123, Ser-172, Ser-271, Ser-284 and Thr-497 during checkpoint mediated cell cycle arrest. Also phosphorylated by CHEK2 on Ser-123, Ser-271, and Ser-284 during checkpoint mediated cell cycle arrest. Phosphorylation on Ser-172 and Thr-497 creates binding sites for YWHAE/14-3-3 epsilon which inhibits CDC25A. Phosphorylation on Ser-75, Ser-123, Ser-172, Ser-271 and Ser-284 may also promote ubiquitin-dependent proteolysis of CDC25A by the SCF complex. Phosphorylation of CDC25A at Ser-75 by CHEK1 primes it for subsequent phosphorylation at Ser-75, Ser-81 and Ser-87 by NEK11. Phosphorylation by NEK11 is required for BTRC-mediated polyubiquitination and degradation. Phosphorylation by PIM1 leads to an increase in phosphatase activity. Phosphorylated by PLK3 following DNA damage, leading to promote its ubiquitination and degradation. Post-translationally, ubiquitinated by the anaphase promoting complex/cyclosome (APC/C) ubiquitin ligase complex that contains FZR1/CDH1 during G1 phase leading to its degradation by the proteasome. Ubiquitinated by a SCF complex containing BTRC and FBXW11 during S phase leading to its degradation by the proteasome. Deubiquitination by USP17L2/DUB3 leads to its stabilization. In terms of tissue distribution, ubiquitously expressed in most developing tissue. High levels in the testis and lower levels in the ovary, particularly in germ cells. Lower levels also in kidney, liver, heart and muscle.

The enzyme catalyses O-phospho-L-tyrosyl-[protein] + H2O = L-tyrosyl-[protein] + phosphate. Its activity is regulated as follows. Stimulated by B-type cyclins. Stimulated by PIM1-mediated phosphorylation. Its function is as follows. Tyrosine protein phosphatase which functions as a dosage-dependent inducer of mitotic progression. Directly dephosphorylates CDK1 and stimulates its kinase activity. Also dephosphorylates CDK2 in complex with cyclin-E, in vitro. This chain is M-phase inducer phosphatase 1 (Cdc25a), found in Mus musculus (Mouse).